The primary structure comprises 312 residues: Fibrinogen-like protein 1 (312 aa).

Positions 1–22 are cleaved as a signal peptide; it reads MAKVFSFILVTTALTMGREISA. The stretch at 23-61 forms a coiled coil; the sequence is LEDCAQEQMRLRAQVRLLETRVKQQQVKIKQLLQENEVQ. In terms of domain architecture, Fibrinogen C-terminal spans 74–306; it reads LGSKRQYADC…SVVMKIRPND (233 aa). Disulfide bonds link cysteine 83–cysteine 112 and cysteine 248–cysteine 261.

Homodimer. Interacts (via the Fibrinogen C-terminal domain) with LAG3 (via Ig-like domains 1 and 2). As to expression, under normal conditions, liver-specific.

It localises to the secreted. Functionally, immune suppressive molecule that inhibits antigen-specific T-cell activation by acting as a major ligand of LAG3. Responsible for LAG3 T-cell inhibitory function. Binds LAG3 independently from MHC class II (MHC-II). Secreted by, and promotes growth of, hepatocytes. The polypeptide is Fibrinogen-like protein 1 (Homo sapiens (Human)).